We begin with the raw amino-acid sequence, 205 residues long: Protein N-terminal glutamine amidohydrolase (205 aa).

Residues Cys-20, His-74, and Asp-90 contribute to the active site.

The protein belongs to the NTAQ1 family. In terms of assembly, monomer.

It carries out the reaction N-terminal L-glutaminyl-[protein] + H2O = N-terminal L-glutamyl-[protein] + NH4(+). Mediates the side-chain deamidation of N-terminal glutamine residues to glutamate, an important step in N-end rule pathway of protein degradation. Conversion of the resulting N-terminal glutamine to glutamate renders the protein susceptible to arginylation, polyubiquitination and degradation as specified by the N-end rule. Does not act on substrates with internal or C-terminal glutamine and does not act on non-glutamine residues in any position. This Drosophila ananassae (Fruit fly) protein is Protein N-terminal glutamine amidohydrolase (tun).